Consider the following 170-residue polypeptide: 3-hydroxydecanoyl-[acyl-carrier-protein] dehydratase (170 aa).

Residue histidine 71 is part of the active site.

It belongs to the thioester dehydratase family. FabA subfamily. In terms of assembly, homodimer.

It is found in the cytoplasm. The enzyme catalyses a (3R)-hydroxyacyl-[ACP] = a (2E)-enoyl-[ACP] + H2O. The catalysed reaction is (3R)-hydroxydecanoyl-[ACP] = (2E)-decenoyl-[ACP] + H2O. It carries out the reaction (2E)-decenoyl-[ACP] = (3Z)-decenoyl-[ACP]. It participates in lipid metabolism; fatty acid biosynthesis. Functionally, necessary for the introduction of cis unsaturation into fatty acids. Catalyzes the dehydration of (3R)-3-hydroxydecanoyl-ACP to E-(2)-decenoyl-ACP and then its isomerization to Z-(3)-decenoyl-ACP. Can catalyze the dehydratase reaction for beta-hydroxyacyl-ACPs with saturated chain lengths up to 16:0, being most active on intermediate chain length. The chain is 3-hydroxydecanoyl-[acyl-carrier-protein] dehydratase from Chelativorans sp. (strain BNC1).